A 190-amino-acid chain; its full sequence is RNA-binding protein OPG065 (190 aa).

One can recognise a Z-binding domain in the interval 5–70 (YIDERSNAEI…DIPPRWFMTT (66 aa)). Residues 117–184 (NPVTVINEYC…AKLAVDKLLG (68 aa)) form the DRBM domain.

This sequence belongs to the orthopoxvirus OPG065 family. Interacts with host G1P2/ISG15. Interacts with host EIF2AK2/PKR. Interacts with host ZBP1.

Functionally, RNA-binding protein that plays a role in the inhibition of multiple cellular antiviral responses activated by double-stranded RNA (dsRNA), such as inhibition of PKR activation, necroptosis, and IFN-mediated antiviral activities. Recognizes and binds Z-RNA structures via its Z-binding domain and dsRNA via its DRBM domain: RNA-binding activity is required to escape host ZBP1-dependent necroptosis. Mechanistically, the Z-binding domain binds Z-RNAs that are produced during vaccinia virus infection, thereby competing with Z-RNA detection by host ZBP1, suppressing ZBP1-dependent necroptosis. Acts as a key inhibitor of the interferon response by blocking the phosphorylation and subsequent activation of IRF3 and IRF7 kinases that are required for interferon-alpha gene expression. Inhibits NF-kappa-B activation and the ubiquitin-like protein ISG15, which is an early antiviral protein. The binding with host ISG15 subsequently blocks host ISGylation. In Vaccinia virus (strain Western Reserve) (VACV), this protein is RNA-binding protein OPG065 (OPG065).